The sequence spans 353 residues: Phosphate acyltransferase (353 aa).

It belongs to the PlsX family. In terms of assembly, homodimer. Probably interacts with PlsY.

It localises to the cytoplasm. It carries out the reaction a fatty acyl-[ACP] + phosphate = an acyl phosphate + holo-[ACP]. The protein operates within lipid metabolism; phospholipid metabolism. In terms of biological role, catalyzes the reversible formation of acyl-phosphate (acyl-PO(4)) from acyl-[acyl-carrier-protein] (acyl-ACP). This enzyme utilizes acyl-ACP as fatty acyl donor, but not acyl-CoA. The chain is Phosphate acyltransferase from Syntrophobacter fumaroxidans (strain DSM 10017 / MPOB).